Here is a 347-residue protein sequence, read N- to C-terminus: NADH-ubiquinone oxidoreductase chain 2 (347 aa).

10 helical membrane-spanning segments follow: residues 3 to 23 (PLTLIIIMFTLFMGTMITVFS), 59 to 79 (YFLTQATASMILMMAITLNIL), 95 to 115 (PVLITLALIIKLGMAPFHFWV), 127 to 147 (GLILLTWQKLAPLSILYQISP), 149 to 169 (INPTMMMSVAILSIMVGGWGG), 178 to 198 (ILAYSSIAHMGWMAAIITFNP), 200 to 220 (TMVLNLIIYILMTIPMFMMFM), 241 to 261 (VSTILITLMSLGGLPPLTGFI), 274 to 294 (GNIILPTAMAMLALLNLYFYM), and 325 to 345 (LITPLIILSTMLLPLTPALSV).

The protein belongs to the complex I subunit 2 family. Core subunit of respiratory chain NADH dehydrogenase (Complex I) which is composed of 45 different subunits. Interacts with TMEM242.

It localises to the mitochondrion inner membrane. The catalysed reaction is a ubiquinone + NADH + 5 H(+)(in) = a ubiquinol + NAD(+) + 4 H(+)(out). Its function is as follows. Core subunit of the mitochondrial membrane respiratory chain NADH dehydrogenase (Complex I) which catalyzes electron transfer from NADH through the respiratory chain, using ubiquinone as an electron acceptor. Essential for the catalytic activity and assembly of complex I. This chain is NADH-ubiquinone oxidoreductase chain 2, found in Oryctolagus cuniculus (Rabbit).